Here is a 485-residue protein sequence, read N- to C-terminus: Noelin (485 aa).

The signal sequence occupies residues 1-16 (MSVPLLKIGVVLSTMA). Residues asparagine 33, asparagine 103, asparagine 187, asparagine 288, asparagine 307, asparagine 394, asparagine 431, and asparagine 473 are each glycosylated (N-linked (GlcNAc...) asparagine). Residues 87–225 (RDARTKQLRQ…ERLRACMQKL (139 aa)) adopt a coiled-coil conformation. In terms of domain architecture, Olfactomedin-like spans 226-478 (ACGKLTGISD…QILYNVTLFH (253 aa)). Residues cysteine 227 and cysteine 409 are joined by a disulfide bond.

As to quaternary structure, homotetramer; disulfide-linked. Dimer of dimers, giving rise to a V-shaped homotretramer. Component of the AMPAR complex. In terms of processing, glycosylated.

It localises to the secreted. Its subcellular location is the synapse. It is found in the endoplasmic reticulum. The protein localises to the cell projection. The protein resides in the axon. It localises to the perikaryon. Contributes to the regulation of axonal growth. May play an important role in regulating the production of neural crest cells by the neural tube. This chain is Noelin (OLFM1), found in Gallus gallus (Chicken).